The chain runs to 473 residues: Probable serine/threonine-protein kinase glkA (473 aa).

The interval Met1–Ser84 is disordered. A compositionally biased stretch (low complexity) spans Asn7–Ser84. The Protein kinase domain maps to Tyr91–Leu366. ATP is bound by residues Val97–Val105 and Lys119. Asp208 serves as the catalytic Proton acceptor. Disordered regions lie at residues Gly389 to Lys418 and Ser437 to Ile473. A compositionally biased stretch (low complexity) spans Ser442 to Asn466.

It belongs to the protein kinase superfamily. CMGC Ser/Thr protein kinase family. GSK-3 subfamily.

The enzyme catalyses L-seryl-[tau protein] + ATP = O-phospho-L-seryl-[tau protein] + ADP + H(+). It catalyses the reaction L-threonyl-[tau protein] + ATP = O-phospho-L-threonyl-[tau protein] + ADP + H(+). This chain is Probable serine/threonine-protein kinase glkA (glkA), found in Dictyostelium discoideum (Social amoeba).